The primary structure comprises 361 residues: tRNA-specific 2-thiouridylase MnmA (361 aa).

Residues 11–18 (GMSGGVDS) and Met37 contribute to the ATP site. Positions 97–99 (NPD) are interaction with target base in tRNA. Residue Cys102 is the Nucleophile of the active site. A disulfide bond links Cys102 and Cys199. Gly126 is a binding site for ATP. The segment at 149 to 151 (KDQ) is interaction with tRNA. Cys199 functions as the Cysteine persulfide intermediate in the catalytic mechanism. Residues 311–312 (RY) are interaction with tRNA.

This sequence belongs to the MnmA/TRMU family.

The protein resides in the cytoplasm. It carries out the reaction S-sulfanyl-L-cysteinyl-[protein] + uridine(34) in tRNA + AH2 + ATP = 2-thiouridine(34) in tRNA + L-cysteinyl-[protein] + A + AMP + diphosphate + H(+). Its function is as follows. Catalyzes the 2-thiolation of uridine at the wobble position (U34) of tRNA, leading to the formation of s(2)U34. This Cupriavidus taiwanensis (strain DSM 17343 / BCRC 17206 / CCUG 44338 / CIP 107171 / LMG 19424 / R1) (Ralstonia taiwanensis (strain LMG 19424)) protein is tRNA-specific 2-thiouridylase MnmA.